Here is a 466-residue protein sequence, read N- to C-terminus: MAIKTPKEIVKILNEYIIGQDEAKKSVAIALYNRYRRMQLPKQMQREITPKNLLMAGPTGVGKTEIARRLATIVEAPFVKVEATKFTEVGYVGRDVESMVRDLVGEAVRMEEKDQFARVKPQATKEANKELVRLLAPGEKREKRENQVQQMQDMMSMLMGGMNNQTNNNQEEISEEVRNQRMDVAEKLNKDLLEDREVTIEVEQAPKANPMSDMMGQMGMDMGSMLNDIMPKKKVKRTLPVREAREVLIQEESRKLVDYDTIYQRAIERSQNNGIIFIDEIDKIIAGNKRNSGEVSREGVQRDILPIVEGSTVNTKYGPVSTDHILFIAAGAFAESKPSDLIPELQGRFPIRVELNALTKDDFVKILKDPQNSLLKQYIALLKADGIKLIFTQEAVDKIAEIAFDVNQGTDNIGARRLSTILEKLLEDVLYEGPDMEMGEITITEAYVEEKLGDIIMNKDLTKFIL.

ATP-binding positions include isoleucine 18, 60 to 65 (GVGKTE), aspartate 279, glutamate 344, and arginine 416.

Belongs to the ClpX chaperone family. HslU subfamily. In terms of assembly, a double ring-shaped homohexamer of HslV is capped on each side by a ring-shaped HslU homohexamer. The assembly of the HslU/HslV complex is dependent on binding of ATP.

Its subcellular location is the cytoplasm. Its function is as follows. ATPase subunit of a proteasome-like degradation complex; this subunit has chaperone activity. The binding of ATP and its subsequent hydrolysis by HslU are essential for unfolding of protein substrates subsequently hydrolyzed by HslV. HslU recognizes the N-terminal part of its protein substrates and unfolds these before they are guided to HslV for hydrolysis. The chain is ATP-dependent protease ATPase subunit HslU from Lactobacillus acidophilus (strain ATCC 700396 / NCK56 / N2 / NCFM).